The following is a 320-amino-acid chain: N-acetylneuraminate lyase (320 aa).

Aceneuramate-binding residues include Thr-51 and Thr-52. Tyr-143 functions as the Proton donor in the catalytic mechanism. Lys-173 serves as the catalytic Schiff-base intermediate with substrate. Residues Ser-175, Gly-199, Asp-201, Glu-202, and Ser-218 each coordinate aceneuramate.

It belongs to the DapA family. NanA subfamily. As to quaternary structure, homotetramer.

It localises to the cytoplasm. The enzyme catalyses aceneuramate = aldehydo-N-acetyl-D-mannosamine + pyruvate. It functions in the pathway amino-sugar metabolism; N-acetylneuraminate degradation. Its function is as follows. Catalyzes the cleavage of N-acetylneuraminic acid (sialic acid) to form pyruvate and N-acetylmannosamine via a Schiff base intermediate. It prevents sialic acids from being recycled and returning to the cell surface. Involved in the N-glycolylneuraminic acid (Neu5Gc) degradation pathway. The protein is N-acetylneuraminate lyase of Pongo abelii (Sumatran orangutan).